The primary structure comprises 105 residues: UPF0235 protein Mchl_2407 (105 aa).

This sequence belongs to the UPF0235 family.

The protein is UPF0235 protein Mchl_2407 of Methylorubrum extorquens (strain CM4 / NCIMB 13688) (Methylobacterium extorquens).